The sequence spans 454 residues: 3-phosphoshikimate 1-carboxyvinyltransferase (454 aa).

The segment at 1–31 (MSENHSEGASRPVISRRPAAGLRADHPVHVP) is disordered. 3-phosphoshikimate contacts are provided by Lys-34, Ser-35, and Arg-39. Residue Lys-34 participates in phosphoenolpyruvate binding. Residues Gly-107 and Arg-135 each coordinate phosphoenolpyruvate. The 3-phosphoshikimate site is built by Ser-180, Gln-182, Asp-334, and Lys-361. Gln-182 is a binding site for phosphoenolpyruvate. Asp-334 acts as the Proton acceptor in catalysis. Residues Arg-365 and Arg-409 each contribute to the phosphoenolpyruvate site.

It belongs to the EPSP synthase family. Monomer.

Its subcellular location is the cytoplasm. It carries out the reaction 3-phosphoshikimate + phosphoenolpyruvate = 5-O-(1-carboxyvinyl)-3-phosphoshikimate + phosphate. It participates in metabolic intermediate biosynthesis; chorismate biosynthesis; chorismate from D-erythrose 4-phosphate and phosphoenolpyruvate: step 6/7. Catalyzes the transfer of the enolpyruvyl moiety of phosphoenolpyruvate (PEP) to the 5-hydroxyl of shikimate-3-phosphate (S3P) to produce enolpyruvyl shikimate-3-phosphate and inorganic phosphate. The chain is 3-phosphoshikimate 1-carboxyvinyltransferase from Granulibacter bethesdensis (strain ATCC BAA-1260 / CGDNIH1).